The chain runs to 215 residues: Probable phosphoglycerate mutase GpmB (215 aa).

Substrate-binding positions include 8–15 (RHGETQWN), 21–22 (QG), arginine 58, arginine 60, 82–85 (ELNM), 104–105 (RR), and 151–152 (GI). Histidine 9 serves as the catalytic Tele-phosphohistidine intermediate. Glutamate 82 serves as the catalytic Proton donor/acceptor.

This sequence belongs to the phosphoglycerate mutase family. GpmB subfamily.

The enzyme catalyses (2R)-2-phosphoglycerate = (2R)-3-phosphoglycerate. It functions in the pathway carbohydrate degradation; glycolysis; pyruvate from D-glyceraldehyde 3-phosphate: step 3/5. This is Probable phosphoglycerate mutase GpmB from Escherichia fergusonii (strain ATCC 35469 / DSM 13698 / CCUG 18766 / IAM 14443 / JCM 21226 / LMG 7866 / NBRC 102419 / NCTC 12128 / CDC 0568-73).